Consider the following 238-residue polypeptide: DNA repair protein RecO (238 aa).

The protein belongs to the RecO family.

Its function is as follows. Involved in DNA repair and RecF pathway recombination. In Flavobacterium psychrophilum (strain ATCC 49511 / DSM 21280 / CIP 103535 / JIP02/86), this protein is DNA repair protein RecO.